The primary structure comprises 504 residues: MSFSVDVLANIAIELQRGIGHQDRFQRLITTLRQVLECDASALLRYDSRQFIPLAIDGLAKDVLGRRFALEGHPRLEAIARAGDVVRFPADSELPDPYDGLIPGQESLKVHACVGLPLFAGQNLIGALTLDGMQPDQFDVFSDEELRLIAALAAGALSNALLIEQLESQNMLPGDAAPFEALKETQMIGLSPGMTQLKKEIEIVAASDLNVLISGETGTGKELVAKAIHEASPRAVNPLVYLNCAALPESVAESELFGHVKGAFTGAISNRSGKFEMADNGTLFLDEIGELSLTLQAKLLRVLQYGDIQRVGDDRSLRVDVRVLAATNRDLREEVLAGRFRADLFHRLSVFPLLVPPLRERGDDVILLAGYFCEQCRLRLGLSRVVLSAGARNLLQHYSFPGNVRELEHAIHRAVVLSRATRSGDEVILEAQHFAFPEVTLPPPEAAAVPIVKQNLREATEEFQRKTIRQALAQNHHNWAASARMLETDVANLHRLAKRLGLKD.

A 4-aspartylphosphate modification is found at D57. One can recognise a Sigma-54 factor interaction domain in the interval 187–416; it reads MIGLSPGMTQ…LEHAIHRAVV (230 aa). ATP is bound by residues 215-222 and 278-287; these read GETGTGKE and ADNGTLFLDE. Positions 479 to 498 form a DNA-binding region, H-T-H motif; that stretch reads WAASARMLETDVANLHRLAK.

Its pathway is nitrogen metabolism; nitric oxide reduction. Required for the expression of anaerobic nitric oxide (NO) reductase, acts as a transcriptional activator for at least the norVW operon. Activation also requires sigma-54. The polypeptide is Anaerobic nitric oxide reductase transcription regulator NorR (Escherichia fergusonii (strain ATCC 35469 / DSM 13698 / CCUG 18766 / IAM 14443 / JCM 21226 / LMG 7866 / NBRC 102419 / NCTC 12128 / CDC 0568-73)).